A 1071-amino-acid polypeptide reads, in one-letter code: Fused isobutyryl-CoA mutase (1071 aa).

The 138-residue stretch at 12–149 (PVRFVTSAAL…QTCDVDLTGE (138 aa)) folds into the B12-binding domain. Histidine 25 is a binding site for adenosylcob(III)alamin. Residues 153-400 (VEAVLAGERT…YQHLLELLGA (248 aa)) are GTPase chaperone MeaI. GTP is bound at residue 203–208 (GSGKSS). The Mg(2+) site is built by serine 207, valine 232, aspartate 233, and aspartate 246. Arginine 249 contacts GTP. 2 residues coordinate Mg(2+): glutamate 293 and threonine 294. Position 340 to 343 (340 to 343 (NKFE)) interacts with GTP. Residues 401–558 (RGLPVDEGVL…RSENLPGHFP (158 aa)) are linker. Substrate-binding residues include phenylalanine 566, arginine 601, arginine 707, tyrosine 751, serine 800, arginine 835, and lysine 840. Positions 952 and 1070 each coordinate GTP.

The protein belongs to the IcmF family. In terms of assembly, homodimer. Adenosylcob(III)alamin serves as cofactor. Requires Mg(2+) as cofactor.

The enzyme catalyses 2-methylpropanoyl-CoA = butanoyl-CoA. The catalysed reaction is GTP + H2O = GDP + phosphate + H(+). In terms of biological role, catalyzes the reversible interconversion of isobutyryl-CoA and n-butyryl-CoA, using radical chemistry. Also exhibits GTPase activity, associated with its G-protein domain (MeaI) that functions as a chaperone that assists cofactor delivery and proper holo-enzyme assembly. Does not exhibit methylmalonyl-CoA mutase (MCM) activity. The protein is Fused isobutyryl-CoA mutase of Nocardia farcinica (strain IFM 10152).